The primary structure comprises 328 residues: Beta-ketoacyl-[acyl-carrier-protein] synthase III (328 aa).

Active-site residues include Cys113 and His253. Residues Gln254–Arg258 form an ACP-binding region. The active site involves Asn283.

It belongs to the thiolase-like superfamily. FabH family. As to quaternary structure, homodimer.

The protein localises to the cytoplasm. It catalyses the reaction malonyl-[ACP] + acetyl-CoA + H(+) = 3-oxobutanoyl-[ACP] + CO2 + CoA. It participates in lipid metabolism; fatty acid biosynthesis. In terms of biological role, catalyzes the condensation reaction of fatty acid synthesis by the addition to an acyl acceptor of two carbons from malonyl-ACP. Catalyzes the first condensation reaction which initiates fatty acid synthesis and may therefore play a role in governing the total rate of fatty acid production. Possesses both acetoacetyl-ACP synthase and acetyl transacylase activities. Its substrate specificity determines the biosynthesis of branched-chain and/or straight-chain of fatty acids. The chain is Beta-ketoacyl-[acyl-carrier-protein] synthase III from Fusobacterium nucleatum subsp. nucleatum (strain ATCC 25586 / DSM 15643 / BCRC 10681 / CIP 101130 / JCM 8532 / KCTC 2640 / LMG 13131 / VPI 4355).